Here is a 758-residue protein sequence, read N- to C-terminus: POU domain, class 2, transcription factor 1 (758 aa).

3 stretches are compositionally biased toward polar residues: residues 1-10 (MKLHSSSKIQ), 19-30 (RMNNPSETSKSP), and 275-285 (VQQLPQSQTTP). Disordered stretches follow at residues 1–43 (MKLH…QTNG), 271–296 (AATP…LEEP), 377–398 (TNQS…RRKK), 450–472 (EKRI…LFSS), and 534–573 (SVLT…MTSS). One can recognise a POU-specific domain in the interval 294–368 (EEPSDLEELE…LLEKWLNDAE (75 aa)). The homeobox DNA-binding region spans 395–454 (RRKKRTSIETNIRVALEKSFLENQKPTSEEITMIADQLNMEKEVIRVWFCNRRQKEKRIN). The span at 455–472 (PPSSGGSSSSPIKSLFSS) shows a compositional bias: low complexity.

Belongs to the POU transcription factor family. Class-2 subfamily. In terms of tissue distribution, expressed in oocytes (at protein level). Expressed in the tadpole brain (at protein level).

It localises to the cytoplasm. The protein localises to the nucleus. In terms of biological role, transcription factor that binds to the octamer motif (5'-ATTTGCAT-3') and activates the promoters of the genes of some small nuclear RNAs (snRNA) and histone H2B. In vitro does not bind to variant octamer sequences, such as the H2B octamer 5'-GTTTGCAT-3', although binding has been observed in vivo during early embryogenesis, suggesting that interactions between pou2f1 and other factors might be required for octamer-dependent H2B transcription. Acts downstream of Notch signaling during radial glia formation. May be important for gastrulation, possibly through the regulation of an FGF-type signaling pathway. The chain is POU domain, class 2, transcription factor 1 (pou2f1) from Xenopus laevis (African clawed frog).